Reading from the N-terminus, the 256-residue chain is Acetyl-coenzyme A carboxylase carboxyl transferase subunit alpha (256 aa).

Positions methionine 1–glutamine 236 constitute a CoA carboxyltransferase C-terminal domain.

The protein belongs to the AccA family. In terms of assembly, acetyl-CoA carboxylase is a heterohexamer composed of biotin carboxyl carrier protein (AccB), biotin carboxylase (AccC) and two subunits each of ACCase subunit alpha (AccA) and ACCase subunit beta (AccD).

It is found in the cytoplasm. It catalyses the reaction N(6)-carboxybiotinyl-L-lysyl-[protein] + acetyl-CoA = N(6)-biotinyl-L-lysyl-[protein] + malonyl-CoA. Its pathway is lipid metabolism; malonyl-CoA biosynthesis; malonyl-CoA from acetyl-CoA: step 1/1. Its function is as follows. Component of the acetyl coenzyme A carboxylase (ACC) complex. First, biotin carboxylase catalyzes the carboxylation of biotin on its carrier protein (BCCP) and then the CO(2) group is transferred by the carboxyltransferase to acetyl-CoA to form malonyl-CoA. The chain is Acetyl-coenzyme A carboxylase carboxyl transferase subunit alpha from Streptococcus equi subsp. zooepidemicus (strain MGCS10565).